We begin with the raw amino-acid sequence, 398 residues long: Phosphoglycerate kinase (398 aa).

Residues 23-25, R38, 61-64, R120, and R153 each bind substrate; these read DLN and HFGR. Residues K203, E325, and 355–358 contribute to the ATP site; that span reads GGDT.

This sequence belongs to the phosphoglycerate kinase family. Monomer.

The protein localises to the cytoplasm. The catalysed reaction is (2R)-3-phosphoglycerate + ATP = (2R)-3-phospho-glyceroyl phosphate + ADP. The protein operates within carbohydrate degradation; glycolysis; pyruvate from D-glyceraldehyde 3-phosphate: step 2/5. The chain is Phosphoglycerate kinase from Sphingopyxis alaskensis (strain DSM 13593 / LMG 18877 / RB2256) (Sphingomonas alaskensis).